We begin with the raw amino-acid sequence, 73 residues long: Large ribosomal subunit protein uL24 (73 aa).

Residues 53–65 (NPKGGFIKKEKPM) are compositionally biased toward basic and acidic residues. A disordered region spans residues 53-73 (NPKGGFIKKEKPMHISNVKKA).

It belongs to the universal ribosomal protein uL24 family. In terms of assembly, part of the 50S ribosomal subunit.

Its function is as follows. One of two assembly initiator proteins, it binds directly to the 5'-end of the 23S rRNA, where it nucleates assembly of the 50S subunit. One of the proteins that surrounds the polypeptide exit tunnel on the outside of the subunit. The sequence is that of Large ribosomal subunit protein uL24 from Helicobacter pylori (strain J99 / ATCC 700824) (Campylobacter pylori J99).